Reading from the N-terminus, the 276-residue chain is Bis(5'-nucleosyl)-tetraphosphatase, symmetrical (276 aa).

Belongs to the Ap4A hydrolase family.

It carries out the reaction P(1),P(4)-bis(5'-adenosyl) tetraphosphate + H2O = 2 ADP + 2 H(+). Functionally, hydrolyzes diadenosine 5',5'''-P1,P4-tetraphosphate to yield ADP. The sequence is that of Bis(5'-nucleosyl)-tetraphosphatase, symmetrical from Psychromonas ingrahamii (strain DSM 17664 / CCUG 51855 / 37).